Reading from the N-terminus, the 314-residue chain is tRNA dimethylallyltransferase (314 aa).

36–43 (GPTASGKT) contributes to the ATP binding site. 38–43 (TASGKT) contributes to the substrate binding site. The interaction with substrate tRNA stretch occupies residues 61–64 (DSVQ).

Belongs to the IPP transferase family. As to quaternary structure, monomer. Requires Mg(2+) as cofactor.

The catalysed reaction is adenosine(37) in tRNA + dimethylallyl diphosphate = N(6)-dimethylallyladenosine(37) in tRNA + diphosphate. Its function is as follows. Catalyzes the transfer of a dimethylallyl group onto the adenine at position 37 in tRNAs that read codons beginning with uridine, leading to the formation of N6-(dimethylallyl)adenosine (i(6)A). The protein is tRNA dimethylallyltransferase of Sorangium cellulosum (strain So ce56) (Polyangium cellulosum (strain So ce56)).